Reading from the N-terminus, the 1120-residue chain is Hachiman protein HamB (1120 aa).

In terms of domain architecture, Helicase ATP-binding spans aspartate 278–arginine 452. Methionine 291 to threonine 298 contributes to the ATP binding site. The short motif at aspartate 395–histidine 398 is the DEAH box element. The Helicase C-terminal domain maps to alanine 521–tyrosine 710.

This sequence belongs to the helicase family.

Component of antiviral defense system Hachiman, composed of HamA and HamB. Expression of Hachiman in B.subtilis (strain BEST7003) confers resistance to phages phi105, phi29, phi3T, rho14, SBSphiJ, SpBeta and SPR. Probably a helicase. The sequence is that of Hachiman protein HamB from Bacillus cereus.